A 217-amino-acid polypeptide reads, in one-letter code: tRNA (guanine-N(7)-)-methyltransferase (217 aa).

S-adenosyl-L-methionine-binding residues include Glu48, Glu73, Asn100, and Asp123. The active site involves Asp123. Residues Lys127 and Asp159 each contribute to the substrate site.

It belongs to the class I-like SAM-binding methyltransferase superfamily. TrmB family.

The enzyme catalyses guanosine(46) in tRNA + S-adenosyl-L-methionine = N(7)-methylguanosine(46) in tRNA + S-adenosyl-L-homocysteine. The protein operates within tRNA modification; N(7)-methylguanine-tRNA biosynthesis. Catalyzes the formation of N(7)-methylguanine at position 46 (m7G46) in tRNA. The sequence is that of tRNA (guanine-N(7)-)-methyltransferase from Leptospira borgpetersenii serovar Hardjo-bovis (strain JB197).